The chain runs to 529 residues: Interleukin-21 receptor (529 aa).

A signal peptide spans 1–19 (MPRGPVAALLLLILHGAWS). 3 cysteine pairs are disulfide-bonded: cysteine 20-cysteine 109, cysteine 25-cysteine 35, and cysteine 65-cysteine 81. Residues 20–237 (CLDLTCYTDY…GEPEAGWDPH (218 aa)) lie on the Extracellular side of the membrane. 2 consecutive Fibronectin type-III domains span residues 21 to 118 (LDLT…AESI) and 119 to 228 (KPAP…TQAG). N-linked (GlcNAc...) asparagine glycans are attached at residues asparagine 73, asparagine 97, asparagine 104, asparagine 125, and asparagine 182. The C-linked (Man) tryptophan glycan is linked to tryptophan 214. The WSXWS motif motif lies at 214-218 (WSEWS). Residues 238 to 258 (MLLLLAVLIIVLVFMGLKIHL) traverse the membrane as a helical segment. The Cytoplasmic portion of the chain corresponds to 259-529 (PWRLWKKIWA…PPVDSGAQSS (271 aa)). A Box 1 motif motif is present at residues 266-274 (IWAPVPTPE). A disordered region spans residues 458–529 (TADPTWRTGS…PPVDSGAQSS (72 aa)).

It belongs to the type I cytokine receptor family. Type 4 subfamily. In terms of assembly, heterodimer with the common gamma subunit. Associates with JAK1. C-mannosylated at Trp-214 in the WSXWS motif, the sugar chain makes extensive hydrogen bonds with Asn-73 sugar, and bridges the two fibronectin domains transforming the V-shaped receptor into an A-frame. In terms of tissue distribution, selectively expressed in lymphoid tissues. Most highly expressed in thymus and spleen.

It is found in the membrane. Functionally, this is a receptor for interleukin-21. This chain is Interleukin-21 receptor (Il21r), found in Mus musculus (Mouse).